The following is a 196-amino-acid chain: Inosine triphosphate pyrophosphatase 2 (196 aa).

20–25 (TGNDGK) is a binding site for ITP. E48 provides a ligand contact to Mg(2+). ITP contacts are provided by residues K61, 77-78 (DT), K94, 153-156 (FGWD), K177, and 182-183 (PR).

Belongs to the HAM1 NTPase family. Homodimer. Requires Mg(2+) as cofactor. It depends on Mn(2+) as a cofactor.

Its subcellular location is the cytoplasm. It carries out the reaction ITP + H2O = IMP + diphosphate + H(+). It catalyses the reaction dITP + H2O = dIMP + diphosphate + H(+). The enzyme catalyses XTP + H2O = XMP + diphosphate + H(+). Its function is as follows. Pyrophosphatase that hydrolyzes non-canonical purine nucleotides such as inosine triphosphate (ITP), deoxyinosine triphosphate (dITP) or xanthosine 5'-triphosphate (XTP) to their respective monophosphate derivatives. The enzyme does not distinguish between the deoxy- and ribose forms. Probably excludes non-canonical purines from RNA and DNA precursor pools, thus preventing their incorporation into RNA and DNA and avoiding chromosomal lesions. This is Inosine triphosphate pyrophosphatase 2 from Trypanosoma cruzi (strain CL Brener).